The following is a 211-amino-acid chain: Endonuclease III (211 aa).

In terms of domain architecture, HhH spans 108–127 (RAALEALPGVGRKTANVVLN). Residues cysteine 187, cysteine 194, cysteine 197, and cysteine 203 each contribute to the [4Fe-4S] cluster site.

The protein belongs to the Nth/MutY family. It depends on [4Fe-4S] cluster as a cofactor.

It catalyses the reaction 2'-deoxyribonucleotide-(2'-deoxyribose 5'-phosphate)-2'-deoxyribonucleotide-DNA = a 3'-end 2'-deoxyribonucleotide-(2,3-dehydro-2,3-deoxyribose 5'-phosphate)-DNA + a 5'-end 5'-phospho-2'-deoxyribonucleoside-DNA + H(+). DNA repair enzyme that has both DNA N-glycosylase activity and AP-lyase activity. The DNA N-glycosylase activity releases various damaged pyrimidines from DNA by cleaving the N-glycosidic bond, leaving an AP (apurinic/apyrimidinic) site. The AP-lyase activity cleaves the phosphodiester bond 3' to the AP site by a beta-elimination, leaving a 3'-terminal unsaturated sugar and a product with a terminal 5'-phosphate. The polypeptide is Endonuclease III (Escherichia coli O6:H1 (strain CFT073 / ATCC 700928 / UPEC)).